The chain runs to 32 residues: Cytochrome b6-f complex subunit 7 (32 aa).

Residues 5–25 (FIASASISFIITLIGLTLGFA) traverse the membrane as a helical segment.

The protein belongs to the PetM family. As to quaternary structure, the 4 large subunits of the cytochrome b6-f complex are cytochrome b6, subunit IV (17 kDa polypeptide, PetD), cytochrome f and the Rieske protein, while the 4 small subunits are PetG, PetL, PetM and PetN. The complex functions as a dimer.

The protein resides in the plastid. Its subcellular location is the chloroplast thylakoid membrane. Functionally, component of the cytochrome b6-f complex, which mediates electron transfer between photosystem II (PSII) and photosystem I (PSI), cyclic electron flow around PSI, and state transitions. The sequence is that of Cytochrome b6-f complex subunit 7 from Guillardia theta (Cryptophyte).